Here is a 219-residue protein sequence, read N- to C-terminus: Bacterial microcompartment shell protein EutL (219 aa).

BMC circularly permuted domains are found at residues 1–113 (MPAL…GAAF) and 114–215 (QWAN…ARNP). Asp-45, Asp-46, Glu-83, and Phe-113 together coordinate ethanolamine. The segment at 45 to 46 (DD) is part of the acidic patch lining the small pore. Glu-157 contacts Zn(2+). Ethanolamine is bound at residue 183-185 (TNY).

Belongs to the EutL/PduB family. As to quaternary structure, homotrimerizes to form a pseudohexamer. The trimers form a two-dimensional array about 37 Angstroms thick.

The protein resides in the bacterial microcompartment. It functions in the pathway amine and polyamine degradation; ethanolamine degradation. Functionally, a component of the bacterial microcompartment (BMC) shell dedicated to ethanolamine degradation. Two crystal forms have been seen; a form with a closed central pore that has 3 very small (1.1-2.2 Angstroms) channels per trimer lined by acidic and aromatic residues. A form with a large central pore (8-12 Angstroms) has also been seen; this is probably a functional pore which allows molecules to enter and exit the BMC in a selective, gated manner. Another group only sees the central pore in the presence of Zn(2+); soaking crystals in ZnCl(2) leads to dramatic conformational changes that open a central pore of about 12 Angstroms. Whether Zn(2+) binding is physiologically relevant is unclear, however it suggests a gating mechanism exists. Ethanolamine-binding by the small channels has been hypothesized to stabilize the EutL central pore in a closed (non-transporting) state. An open pore is thought to be large enough to transport ATP and/or cobalamin. The polypeptide is Bacterial microcompartment shell protein EutL (eutL) (Escherichia coli (strain K12)).